We begin with the raw amino-acid sequence, 264 residues long: Protein hob3 (264 aa).

Positions 17–237 constitute a BAR domain; it reads VMMKTGHVER…FDNSVREDYS (221 aa). Coiled coils occupy residues 25 to 65 and 165 to 187; these read ERTV…AMTA and RTEK…LVSE.

The protein resides in the cytoplasm. The protein localises to the cytoskeleton. Functionally, involved in cytokinesis and septation where it has a role in the localization of F-actin. The protein is Protein hob3 (hob3) of Schizosaccharomyces pombe (strain 972 / ATCC 24843) (Fission yeast).